We begin with the raw amino-acid sequence, 383 residues long: Succinyl-diaminopimelate desuccinylase (383 aa).

His-73 is a Zn(2+) binding site. The active site involves Asp-75. Residue Asp-107 coordinates Zn(2+). Glu-141 acts as the Proton acceptor in catalysis. Positions 142, 170, and 356 each coordinate Zn(2+).

The protein belongs to the peptidase M20A family. DapE subfamily. In terms of assembly, homodimer. It depends on Zn(2+) as a cofactor. Co(2+) serves as cofactor.

It carries out the reaction N-succinyl-(2S,6S)-2,6-diaminopimelate + H2O = (2S,6S)-2,6-diaminopimelate + succinate. The protein operates within amino-acid biosynthesis; L-lysine biosynthesis via DAP pathway; LL-2,6-diaminopimelate from (S)-tetrahydrodipicolinate (succinylase route): step 3/3. In terms of biological role, catalyzes the hydrolysis of N-succinyl-L,L-diaminopimelic acid (SDAP), forming succinate and LL-2,6-diaminopimelate (DAP), an intermediate involved in the bacterial biosynthesis of lysine and meso-diaminopimelic acid, an essential component of bacterial cell walls. This is Succinyl-diaminopimelate desuccinylase from Pseudomonas entomophila (strain L48).